A 569-amino-acid chain; its full sequence is Spermatogenesis-associated protein 16 (569 aa).

Over residues 67 to 92 the composition is skewed to basic and acidic residues; that stretch reads KGIKEKQSNDLEKAAFKRKAEGEEKP. The tract at residues 67–96 is disordered; that stretch reads KGIKEKQSNDLEKAAFKRKAEGEEKPTRKK.

Belongs to the SPATA16 family. Expressed in testis.

The protein localises to the golgi apparatus. It is found in the cytoplasmic vesicle. The protein resides in the secretory vesicle. It localises to the acrosome. Its function is as follows. Essential for spermiogenesis and male fertility. Involved in the formation of sperm acrosome during spermatogenesis. In Homo sapiens (Human), this protein is Spermatogenesis-associated protein 16 (SPATA16).